Reading from the N-terminus, the 206-residue chain is ATP phosphoribosyltransferase (206 aa).

Belongs to the ATP phosphoribosyltransferase family. Short subfamily. In terms of assembly, heteromultimer composed of HisG and HisZ subunits.

The protein localises to the cytoplasm. It catalyses the reaction 1-(5-phospho-beta-D-ribosyl)-ATP + diphosphate = 5-phospho-alpha-D-ribose 1-diphosphate + ATP. It functions in the pathway amino-acid biosynthesis; L-histidine biosynthesis; L-histidine from 5-phospho-alpha-D-ribose 1-diphosphate: step 1/9. Its function is as follows. Catalyzes the condensation of ATP and 5-phosphoribose 1-diphosphate to form N'-(5'-phosphoribosyl)-ATP (PR-ATP). Has a crucial role in the pathway because the rate of histidine biosynthesis seems to be controlled primarily by regulation of HisG enzymatic activity. This Wolinella succinogenes (strain ATCC 29543 / DSM 1740 / CCUG 13145 / JCM 31913 / LMG 7466 / NCTC 11488 / FDC 602W) (Vibrio succinogenes) protein is ATP phosphoribosyltransferase.